Reading from the N-terminus, the 235-residue chain is Ribitol-5-phosphate cytidylyltransferase (235 aa).

CTP-binding positions include 7-10 (LAGG), 82-88 (GADRNTS), and Ser-113.

The protein belongs to the IspD/TarI cytidylyltransferase family. TarI subfamily.

It catalyses the reaction D-ribitol 5-phosphate + CTP + H(+) = CDP-L-ribitol + diphosphate. It participates in cell wall biogenesis; poly(ribitol phosphate) teichoic acid biosynthesis. Functionally, catalyzes the transfer of the cytidylyl group of CTP to D-ribitol 5-phosphate. The protein is Ribitol-5-phosphate cytidylyltransferase of Streptococcus pneumoniae serotype 19F (strain G54).